A 134-amino-acid polypeptide reads, in one-letter code: Small ribosomal subunit protein uS9c (134 aa).

Residues 105-134 (QGYLTRNPLRKERKKYGLKKARKAPQFSKR) are disordered. Positions 115-134 (KERKKYGLKKARKAPQFSKR) are enriched in basic residues.

Belongs to the universal ribosomal protein uS9 family.

The protein resides in the plastid. It localises to the chloroplast. This Nephroselmis olivacea (Green alga) protein is Small ribosomal subunit protein uS9c (rps9).